A 175-amino-acid polypeptide reads, in one-letter code: Co-chaperone protein HscB homolog (175 aa).

Positions 7–79 constitute a J domain; sequence SHFDLFHLPA…LQRASYLLSL (73 aa).

The protein belongs to the HscB family. In terms of assembly, interacts with HscA and stimulates its ATPase activity.

Its function is as follows. Co-chaperone involved in the maturation of iron-sulfur cluster-containing proteins. Seems to help targeting proteins to be folded toward HscA. The polypeptide is Co-chaperone protein HscB homolog (Burkholderia vietnamiensis (strain G4 / LMG 22486) (Burkholderia cepacia (strain R1808))).